Reading from the N-terminus, the 352-residue chain is MTFTLAELASRVGGEVVGDGALVVEGVAPLEDAGPHDVSFFSNRKYRKAFEASRAGVVVVEPDAEIPAGRTVLRARNAYLAFAKISTLFHPPQEPLPEIAPEAVIHPSARVHPSAQVMPLASIGPDAVIGARTIVHPGVHVCEGARVGEDCLLYPNVVIRERCVVGNRVILQPGCVIGSDGFGFAFDPDGEGHGPRHFKVPQAGIAVVEDDVEIGANACIDRATLGATRVGRGTKIDNLVQLGHNVELGPLCLIVAQVGIAGSTKLGMGVVAAGQVGIIGHLNIGDGVKMGAQSGIAGDVAAGDTVSGTPAQPHADWLRSQAALRQLPDLRREVKELRRELDRLRAGKEGKP.

H244 (proton acceptor) is an active-site residue.

The protein belongs to the transferase hexapeptide repeat family. LpxD subfamily. Homotrimer.

It carries out the reaction a UDP-3-O-[(3R)-3-hydroxyacyl]-alpha-D-glucosamine + a (3R)-hydroxyacyl-[ACP] = a UDP-2-N,3-O-bis[(3R)-3-hydroxyacyl]-alpha-D-glucosamine + holo-[ACP] + H(+). The protein operates within bacterial outer membrane biogenesis; LPS lipid A biosynthesis. Catalyzes the N-acylation of UDP-3-O-acylglucosamine using 3-hydroxyacyl-ACP as the acyl donor. Is involved in the biosynthesis of lipid A, a phosphorylated glycolipid that anchors the lipopolysaccharide to the outer membrane of the cell. This is UDP-3-O-acylglucosamine N-acyltransferase from Anaeromyxobacter sp. (strain Fw109-5).